Consider the following 358-residue polypeptide: G-protein coupled receptor 20 (358 aa).

The Extracellular portion of the chain corresponds to 1–48; it reads MPSVSPAGPSAGAVPNATAVTTVRTNASGLEVPLFHLFARLDEELHGT. N-linked (GlcNAc...) asparagine glycans are attached at residues N16 and N26. Residues 49-69 form a helical membrane-spanning segment; it reads FPGLWLALMAVHGAIFLAGLV. Over 70 to 86 the chain is Cytoplasmic; the sequence is LNGLALYVFCCRTRAKT. Residues 87–107 form a helical membrane-spanning segment; it reads PSVIYTINLVVTDLLVGLSLP. Residues 108 to 125 lie on the Extracellular side of the membrane; that stretch reads TRFAVYYGARGCLRCAFP. A helical membrane pass occupies residues 126 to 146; it reads HVLGYFLNMHCSILFLTCICV. Residues 147–168 are Cytoplasmic-facing; it reads DRYLAIVRPEGSRRCRQPACAR. A helical transmembrane segment spans residues 169–189; it reads AVCAFVWLAAGAVTLSVLGVT. Residues 190 to 196 lie on the Extracellular side of the membrane; the sequence is GSRPCCR. The helical transmembrane segment at 197–217 threads the bilayer; sequence VFALTVLEFLLPLLVISVFTG. At 218-238 the chain is on the cytoplasmic side; the sequence is RIMCALSRPGLLHQGRQRRVR. The chain crosses the membrane as a helical span at residues 239–259; sequence AMQLLLTVLIIFLVCFTPFHA. The Extracellular portion of the chain corresponds to 260–275; the sequence is RQVAVALWPDMPHHTS. The chain crosses the membrane as a helical span at residues 276–296; that stretch reads LVVYHVAVTLSSLNSCMDPIV. At 297-358 the chain is on the cytoplasmic side; sequence YCFVTSGFQA…TQALANGPEA (62 aa). Positions 315–339 are disordered; it reads HGEREPSSGDVVSMHRSSKGSGRHH. Over residues 330 to 339 the composition is skewed to basic residues; sequence RSSKGSGRHH.

Belongs to the G-protein coupled receptor 1 family. As to expression, ubiquitous with highest levels in intestinal tissues. In the brain detected in thalamus, putamen, and caudate, but not in frontal cortex, pons and hypothalamus.

It is found in the cell membrane. Functionally, orphan receptor with constitutive G(i) signaling activity that activate cyclic AMP. The chain is G-protein coupled receptor 20 (GPR20) from Homo sapiens (Human).